Here is a 285-residue protein sequence, read N- to C-terminus: Inositol oxygenase (285 aa).

Residues 1–28 (MKVAADPDPSLVSQRDMEPEAAKDKDSF) form a disordered region. Over residues 15–28 (RDMEPEAAKDKDSF) the composition is skewed to basic and acidic residues. Position 29 (arginine 29) interacts with substrate. Serine 33 is modified (phosphoserine). 85 to 87 (DES) contacts substrate. Positions 98, 123, and 124 each coordinate Fe cation. Substrate is bound by residues lysine 127 and 141 to 142 (GD). Fe cation contacts are provided by histidine 194, histidine 220, and aspartate 253. Substrate is bound at residue 220 to 221 (HS).

The protein belongs to the myo-inositol oxygenase family. Fe cation is required as a cofactor.

It localises to the cytoplasm. The catalysed reaction is myo-inositol + O2 = D-glucuronate + H2O + H(+). It participates in polyol metabolism; myo-inositol degradation into D-glucuronate; D-glucuronate from myo-inositol: step 1/1. This chain is Inositol oxygenase (MIOX), found in Bos taurus (Bovine).